The sequence spans 425 residues: G protein-activated inward rectifier potassium channel 2 (425 aa).

Over 1–91 (MTMAKLTESM…ILTTLVDLKW (91 aa)) the chain is Cytoplasmic. A phosphoserine mark is found at Ser18 and Ser25. The chain crosses the membrane as a helical span at residues 92-116 (RFNLLIFVMVYTVTWLFFGMIWWLI). The Extracellular portion of the chain corresponds to 117 to 140 (AYIRGDMDHVEDPSWTPCVTNLNG). An intramembrane region (helical; Pore-forming) is located at residues 141–152 (FVSAFLFSIETE). The segment at residues 153-159 (TTIGYGY) is an intramembrane region (pore-forming). Positions 154-159 (TIGYGY) match the Selectivity filter motif. Over 160 to 168 (RVITDKCPE) the chain is Extracellular. Residues 169–190 (GIILLLIQSVLGSIVNAFMVGC) form a helical membrane-spanning segment. Residues 191–425 (MFVKISQPKK…VANLENESKV (235 aa)) lie on the Cytoplasmic side of the membrane. The segment at 392 to 425 (NQHAELETEEEEKNPEEQTERNGDVANLENESKV) is disordered. Residues 422-425 (ESKV) carry the PDZ-binding motif.

It belongs to the inward rectifier-type potassium channel (TC 1.A.2.1) family. KCNJ6 subfamily. Associates with KCNJ3/GIRK1 or KCNJ5/GRIK4 to form a G-protein-activated heteromultimer pore-forming unit. The resulting inward current is much larger. Interacts (via PDZ-binding motif) with SNX27 (via PDZ domain); the interaction is required when endocytosed to prevent degradation in lysosomes and promote recycling to the plasma membrane. Expressed in insulin-secreting cells and brain.

It is found in the membrane. The enzyme catalyses K(+)(in) = K(+)(out). Its activity is regulated as follows. Activated by phosphatidylinositol 4,5 biphosphate (PtdIns(4,5)P2). Its function is as follows. Inward rectifier potassium channels are characterized by a greater tendency to allow potassium to flow into the cell rather than out of it. Their voltage dependence is regulated by the concentration of extracellular potassium; as external potassium is raised, the voltage range of the channel opening shifts to more positive voltages. The inward rectification is mainly due to the blockage of outward current by internal magnesium. This potassium channel may be involved in the regulation of insulin secretion by glucose and/or neurotransmitters acting through G-protein-coupled receptors. The protein is G protein-activated inward rectifier potassium channel 2 (KCNJ6) of Mesocricetus auratus (Golden hamster).